The sequence spans 199 residues: Recombination protein RecR (199 aa).

The C4-type zinc-finger motif lies at 57–72 (CQSCRTYTEETLCPIC). The 96-residue stretch at 81–176 (STICVVETPA…MISRIAHGVP (96 aa)) folds into the Toprim domain.

Belongs to the RecR family.

May play a role in DNA repair. It seems to be involved in an RecBC-independent recombinational process of DNA repair. It may act with RecF and RecO. This chain is Recombination protein RecR, found in Shewanella baltica (strain OS195).